The sequence spans 201 residues: Recombination protein RecR (201 aa).

Residues 59-74 (CEICGNMDTENICRIC) form a C4-type zinc finger. Positions 82–177 (SIIAIVETVA…KISRLASGIP (96 aa)) constitute a Toprim domain.

It belongs to the RecR family.

Its function is as follows. May play a role in DNA repair. It seems to be involved in an RecBC-independent recombinational process of DNA repair. It may act with RecF and RecO. The protein is Recombination protein RecR of Rickettsia rickettsii (strain Iowa).